Here is a 769-residue protein sequence, read N- to C-terminus: PDZ domain-containing protein 4 (769 aa).

Positions 130–214 constitute a PDZ domain; sequence EVELYKSSHR…TNISLLVARP (85 aa). The interval 221–315 is disordered; the sequence is RWKDSDRDDF…TNTPGSLRKF (95 aa). Positions 229–239 are enriched in acidic residues; it reads DFLDDFGSENE. Ser236 is modified (phosphoserine). Positions 282 to 298 are enriched in basic and acidic residues; it reads RTDESTRNEESSEHDLL. A coiled-coil region spans residues 389 to 419; that stretch reads VNRNESLGHEMAMLEEELRHLEFKCRNILRA. Positions 445–579 are disordered; that stretch reads ASEPKKHELS…RHRGQGQEGE (135 aa). Positions 447–467 are enriched in basic and acidic residues; it reads EPKKHELSDISELPEKSDKDS. The residue at position 454 (Ser454) is a Phosphoserine. Residues 468-479 show a composition bias toward polar residues; sequence TSAYNTGESCRS. The segment covering 530–547 has biased composition (basic and acidic residues); it reads LSRDPEAGRRQHAEERGR.

In terms of tissue distribution, brain-specific. Expressed in fetal and adult brain. Up-regulated in synovial carcinomas.

It localises to the cytoplasm. The protein localises to the cell cortex. The sequence is that of PDZ domain-containing protein 4 (PDZD4) from Homo sapiens (Human).